A 497-amino-acid polypeptide reads, in one-letter code: 4,4'-diaponeurosporene oxygenase (497 aa).

Position 7–19 (7–19 (VIGGGLGGISAAI)) interacts with FAD.

Belongs to the carotenoid/retinoid oxidoreductase family. CrtP subfamily. FAD serves as cofactor.

The catalysed reaction is all-trans-4,4'-diaponeurosporene + 2 AH2 + 2 O2 = 4,4'-diaponeurosporenal + 2 A + 3 H2O. It functions in the pathway carotenoid biosynthesis; staphyloxanthin biosynthesis; staphyloxanthin from farnesyl diphosphate: step 3/5. Functionally, involved in the biosynthesis of the yellow-orange carotenoid staphyloxanthin, which plays a role in the virulence via its protective function against oxidative stress. Catalyzes the oxidation of the terminal methyl side group of 4,4'-diaponeurosporene to form 4,4'-diaponeurosporen-4-al. The chain is 4,4'-diaponeurosporene oxygenase from Staphylococcus aureus (strain USA300).